The chain runs to 176 residues: Sigma intracellular receptor 2 (176 aa).

The Cytoplasmic portion of the chain corresponds to 1–9 (MGAPATRRC). A helical membrane pass occupies residues 10 to 30 (VEWLLGLYFLSHIPITLFMDL). Residues 10–158 (VEWLLGLYFL…PYLLIPFILL (149 aa)) form the EXPERA domain. Residues 31 to 68 (QAVLPRELYPVEFRNLLKWYAKEFKDPLLQEPPAWFKS) are Lumenal-facing. Residues 69–89 (FLFCELVFQLPFFPIATYAFL) form a helical membrane-spanning segment. Val-75 and Gln-77 together coordinate cholesterol. Residues 90–99 (KGSCKWIRTP) lie on the Cytoplasmic side of the membrane. The chain crosses the membrane as a helical span at residues 100–120 (AIIYSVHTMTTLIPILSTFLF). The required for interaction with Hst1/HTN1 stretch occupies residues 108–176 (MTTLIPILST…YKYEEKRKKK (69 aa)). Topologically, residues 121–140 (EDFSKASGFKGQRPETLHER) are lumenal. The chain crosses the membrane as a helical span at residues 141–161 (LTLVSVYAPYLLIPFILLIFM). Topologically, residues 162–176 (LRSPYYKYEEKRKKK) are cytoplasmic. Residues 172 to 176 (KRKKK) carry the ER retention motif motif.

Belongs to the TMEM97/sigma-2 receptor family. Homodimer. Interacts with NPC1; the interaction impairs NPC1-mediated cholesterol transport. Interacts with PGRMC1 and LDLR; the interaction increases LDL internalization. Interacts with histatin 1/HTN1; the interaction induces HTN1-stimulating wound healing. Interacts with TSPO. Forms a complex with TSPO and PGRMC1; the interaction occurs in MIA PaCa-2 cells but not in MCF7 cells. As to expression, widely expressed in normal tissues. Expressed in pancreatic, renal, breast, colon, ovarian surface epithelial (OSE) cells. Highly expressed in various proliferating cancer cells.

It localises to the rough endoplasmic reticulum membrane. The protein resides in the nucleus membrane. Sigma-2 receptor which contributes to ameliorate dysfunctional cellular processes and slow degenerative progression by regulating cell functions including cholesterol biosynthesis/trafficking, membrane trafficking, autophagy, lipid membrane-bound protein trafficking, and receptor stabilization at the cell surface. Forms a ternary complex with PGRMC1 receptor and low density lipoprotein receptor/LDLR at the plasma membrane, which increases LDLR-mediated LDL cholesterol internalization. Decreases lysosomal sterol transporter NPC1 availability to the cell, probably through NPC1-binding, hence controlling lipid transport, including cholesterol and LBPA, outside of late endosome/lysosome. Binds regio- and stereoselective ligand 20(S)-hydroxycholesterol (20(S)-OHC) which enhances TMEM97-NPC1 interaction and decreases TMEM97-PGRMC1 and TMEM97-TSPO interactions, thereby linking OHC binding to cholesterol homeostasis. Also able to bind cholesterol. Binds histatin 1 (Hst 1)/HN1 salivary peptide at the ER membrane, which is critical for increasing mitochondria-ER contacts and stimulating Hst1 wound healing properties. May alter the activity of some cytochrome P450 proteins. Although shows homologies with sterol isomerases (EXPERA domain), not able to catalyze sterol isomerization. However, may act as sensors of these molecules. Acts as a quality control factor in the ER, promoting the proteolytic degradation of nonproductive and extramitochondrial precursor proteins in the ER membrane thus removing them from the ER surface. The polypeptide is Sigma intracellular receptor 2 (Homo sapiens (Human)).